The chain runs to 1091 residues: Voltage-dependent calcium channel subunit alpha-2/delta-3 (1091 aa).

Residues 1–33 (MAGPGSLCCASRGASALLATALLYAALGDVVRS) form the signal peptide. The Extracellular segment spans residues 34-1068 (EQQIPLSVVK…HPEENARECG (1035 aa)). A glycan (N-linked (GlcNAc...) asparagine) is linked at asparagine 166. Residues 256-438 (DVVILVDVSG…ENVMEYLHVL (183 aa)) enclose the VWFA domain. The a divalent metal cation site is built by aspartate 262, serine 264, and serine 266. The MIDAS-like motif signature appears at 262–266 (DVSGS). An N-linked (GlcNAc...) asparagine glycan is attached at asparagine 309. A disulfide bond links cysteine 412 and cysteine 1055. The region spanning 452-549 (WTEAYIDSTL…RPLYEEGKKR (98 aa)) is the Cache domain. N-linked (GlcNAc...) asparagine glycosylation is found at asparagine 553 and asparagine 632. Residue tyrosine 924 is modified to Phosphotyrosine. The chain crosses the membrane as a helical span at residues 1069-1089 (GASSLQAQAALLLLPLVSSLF). Over 1090–1091 (SR) the chain is Cytoplasmic.

The protein belongs to the calcium channel subunit alpha-2/delta family. Dimer formed of alpha-2-2 and delta-2 chains; disulfide-linked. Voltage-dependent calcium channels are multisubunit complexes, consisting of alpha-1 (CACNA1), alpha-2 (CACNA2D), beta (CACNB) and delta (CACNA2D) subunits in a 1:1:1:1 ratio. In terms of processing, N-glycosylated. Post-translationally, may be proteolytically processed into subunits alpha-2-3 and delta-3 that are disulfide-linked. It is however unclear whether such cleavage really takes place in vivo and has a functional role. In terms of tissue distribution, brain-specific. Predominantly expressed in the caudate putamen, entorhinal complex, hippocampus and cortex.

Its subcellular location is the membrane. Functionally, the alpha-2/delta subunit of voltage-dependent calcium channels regulates calcium current density and activation/inactivation kinetics of the calcium channel. Acts as a regulatory subunit for P/Q-type calcium channel (CACNA1A), N-type (CACNA1B), L-type (CACNA1C OR CACNA1D) but not T-type (CACNA1G). This is Voltage-dependent calcium channel subunit alpha-2/delta-3 (Cacna2d3) from Mus musculus (Mouse).